Here is a 258-residue protein sequence, read N- to C-terminus: Acyl-[acyl-carrier-protein]--UDP-N-acetylglucosamine O-acyltransferase (258 aa).

It belongs to the transferase hexapeptide repeat family. LpxA subfamily. Homotrimer.

The protein resides in the cytoplasm. It catalyses the reaction a (3R)-hydroxyacyl-[ACP] + UDP-N-acetyl-alpha-D-glucosamine = a UDP-3-O-[(3R)-3-hydroxyacyl]-N-acetyl-alpha-D-glucosamine + holo-[ACP]. The protein operates within glycolipid biosynthesis; lipid IV(A) biosynthesis; lipid IV(A) from (3R)-3-hydroxytetradecanoyl-[acyl-carrier-protein] and UDP-N-acetyl-alpha-D-glucosamine: step 1/6. Involved in the biosynthesis of lipid A, a phosphorylated glycolipid that anchors the lipopolysaccharide to the outer membrane of the cell. The sequence is that of Acyl-[acyl-carrier-protein]--UDP-N-acetylglucosamine O-acyltransferase from Pseudomonas putida (strain GB-1).